Here is a 3093-residue protein sequence, read N- to C-terminus: Intermembrane lipid transfer protein VPS13A (3093 aa).

Residues 3 to 116 form the Chorein N-terminal domain; it reads FESVVVDVLN…LMEAKQQELK (114 aa). Residues 373 to 406 form a TPR 1 repeat; that stretch reads LTSKKPPGELLVSLEELEKTLDVLNITIARQQAE. A Phosphoserine modification is found at Ser839. An FFAT motif is present at residues 842 to 848; the sequence is EFFDAPC. Ser1416 carries the post-translational modification Phosphoserine. Residues 2209–2454 form the SHR-BD domain; that stretch reads VAFHSPYWMV…VFYTWADPVG (246 aa). A TPR 2 repeat occupies 2860–2898; it reads ILGLDVLGNPFGLIREFSEGVEAFFYEPYQGAIQGPEEF. The interval 2953–3027 is required for lipid droplet localization; sequence PAGFREGITR…SSTFQGIKRA (75 aa).

Belongs to the VPS13 family. As to quaternary structure, interacts (via FFAT motif) with VAPA and VAPB. Interacts with RAB7A. Interacts with XK.

Its subcellular location is the mitochondrion outer membrane. It is found in the endoplasmic reticulum membrane. The protein resides in the endosome membrane. It localises to the lysosome membrane. The protein localises to the lipid droplet. Its subcellular location is the golgi apparatus. It is found in the cytoplasmic vesicle. The protein resides in the secretory vesicle. It localises to the neuronal dense core vesicle. Functionally, mediates the transfer of lipids between membranes at organelle contact sites. Required for the formation or stabilization of ER-mitochondria contact sites which enable transfer of lipids between the ER and mitochondria. Negatively regulates lipid droplet size and motility. Required for efficient lysosomal protein degradation. The polypeptide is Intermembrane lipid transfer protein VPS13A (VPS13A) (Macaca fascicularis (Crab-eating macaque)).